A 131-amino-acid polypeptide reads, in one-letter code: Ribonuclease VapC3 (131 aa).

One can recognise a PINc domain in the interval Val-4–Leu-121. Asp-6, Asp-100, and Asp-118 together coordinate Mg(2+).

This sequence belongs to the PINc/VapC protein family. In terms of assembly, homodimer. Forms a complex with putative antitoxin VapB3, possibly VapB(2)-VapC(2). Mg(2+) is required as a cofactor.

Inhibited by EDTA. Functionally, toxic component of a type II toxin-antitoxin (TA) system. Has ribonuclease activity. In Pyrobaculum aerophilum (strain ATCC 51768 / DSM 7523 / JCM 9630 / CIP 104966 / NBRC 100827 / IM2), this protein is Ribonuclease VapC3.